The sequence spans 435 residues: 3-phosphoshikimate 1-carboxyvinyltransferase (435 aa).

3-phosphoshikimate-binding residues include K25, S26, and R30. Residue K25 participates in phosphoenolpyruvate binding. Residues G99 and R130 each coordinate phosphoenolpyruvate. The 3-phosphoshikimate site is built by S176, S177, Q178, S204, D319, N342, and K346. Q178 lines the phosphoenolpyruvate pocket. The active-site Proton acceptor is D319. Residues R350, R394, and K419 each coordinate phosphoenolpyruvate.

Belongs to the EPSP synthase family. As to quaternary structure, monomer.

The protein resides in the cytoplasm. The enzyme catalyses 3-phosphoshikimate + phosphoenolpyruvate = 5-O-(1-carboxyvinyl)-3-phosphoshikimate + phosphate. It functions in the pathway metabolic intermediate biosynthesis; chorismate biosynthesis; chorismate from D-erythrose 4-phosphate and phosphoenolpyruvate: step 6/7. Its function is as follows. Catalyzes the transfer of the enolpyruvyl moiety of phosphoenolpyruvate (PEP) to the 5-hydroxyl of shikimate-3-phosphate (S3P) to produce enolpyruvyl shikimate-3-phosphate and inorganic phosphate. This Haemophilus ducreyi (strain 35000HP / ATCC 700724) protein is 3-phosphoshikimate 1-carboxyvinyltransferase.